The chain runs to 62 residues: Photosystem II reaction center protein Z (62 aa).

2 helical membrane passes run A8–A28 and F41–I61.

This sequence belongs to the PsbZ family. In terms of assembly, PSII is composed of 1 copy each of membrane proteins PsbA, PsbB, PsbC, PsbD, PsbE, PsbF, PsbH, PsbI, PsbJ, PsbK, PsbL, PsbM, PsbT, PsbY, PsbZ, Psb30/Ycf12, at least 3 peripheral proteins of the oxygen-evolving complex and a large number of cofactors. It forms dimeric complexes.

The protein localises to the plastid. It localises to the chloroplast thylakoid membrane. In terms of biological role, may control the interaction of photosystem II (PSII) cores with the light-harvesting antenna, regulates electron flow through the 2 photosystem reaction centers. PSII is a light-driven water plastoquinone oxidoreductase, using light energy to abstract electrons from H(2)O, generating a proton gradient subsequently used for ATP formation. The polypeptide is Photosystem II reaction center protein Z (Gossypium barbadense (Sea Island cotton)).